The primary structure comprises 89 residues: Small ribosomal subunit protein uS15 (89 aa).

The protein belongs to the universal ribosomal protein uS15 family. As to quaternary structure, part of the 30S ribosomal subunit. Forms a bridge to the 50S subunit in the 70S ribosome, contacting the 23S rRNA.

In terms of biological role, one of the primary rRNA binding proteins, it binds directly to 16S rRNA where it helps nucleate assembly of the platform of the 30S subunit by binding and bridging several RNA helices of the 16S rRNA. Its function is as follows. Forms an intersubunit bridge (bridge B4) with the 23S rRNA of the 50S subunit in the ribosome. In Anaeromyxobacter dehalogenans (strain 2CP-1 / ATCC BAA-258), this protein is Small ribosomal subunit protein uS15.